A 367-amino-acid polypeptide reads, in one-letter code: Phosphoribosylaminoimidazole-succinocarboxamide synthase (367 aa).

This sequence belongs to the SAICAR synthetase family.

The enzyme catalyses 5-amino-1-(5-phospho-D-ribosyl)imidazole-4-carboxylate + L-aspartate + ATP = (2S)-2-[5-amino-1-(5-phospho-beta-D-ribosyl)imidazole-4-carboxamido]succinate + ADP + phosphate + 2 H(+). It participates in purine metabolism; IMP biosynthesis via de novo pathway; 5-amino-1-(5-phospho-D-ribosyl)imidazole-4-carboxamide from 5-amino-1-(5-phospho-D-ribosyl)imidazole-4-carboxylate: step 1/2. In Shewanella putrefaciens (strain CN-32 / ATCC BAA-453), this protein is Phosphoribosylaminoimidazole-succinocarboxamide synthase.